Consider the following 778-residue polypeptide: Arf-GAP with coiled-coil, ANK repeat and PH domain-containing protein 2 (778 aa).

The BAR domain occupies 1–226 (MKMTVDFEEC…MKDLGAQLDR (226 aa)). Residues 266-361 (GIVMEGYLFK…WIKAVQTSIA (96 aa)) form the PH domain. The disordered stretch occupies residues 371 to 391 (SEKLDKKSSPSTGSLDSGNES). Polar residues predominate over residues 379–388 (SPSTGSLDSG). Phosphoserine is present on residues serine 384 and serine 387. An Arf-GAP domain is found at 399-520 (ESALQRVQCV…KFVDKYSVSS (122 aa)). A C4-type zinc finger spans residues 414-437 (CCDCGLADPRWASINLGITLCIEC). Positions 518-596 (VSSSPPEQEK…EPEGERQDSS (79 aa)) are disordered. At serine 521 the chain carries Phosphoserine. The span at 524-539 (EQEKKVVSKDSEEKRL) shows a compositional bias: basic and acidic residues. The segment covering 550–569 (VRTSIQSSVKSNDSGIQQSS) has biased composition (polar residues). Serine 581 and serine 584 each carry phosphoserine. ANK repeat units lie at residues 640–669 (NKATPLIQAVLGGSLVTCEFLLQNGANVNQ), 673–702 (QGRGPLHHATVLGHTGQVCLFLKRGANQHA), and 706–735 (EGKDPLSIAVEAANADIVTLLRLARMNEEM). The residue at position 742 (tyrosine 742) is a Phosphotyrosine. Serine 775 carries the phosphoserine modification.

As to quaternary structure, interacts with RAB35 (GTP-bound form); the interaction is direct and probably recruits ACAP2 to membranes. Interacts with MICALL1; the interaction is indirect through RAB35.

It localises to the endosome membrane. Its subcellular location is the cell membrane. GAP activity stimulated by phosphatidylinositol 4,5-bisphosphate (PIP2) and phosphatidic acid. Its function is as follows. GTPase-activating protein (GAP) for ADP ribosylation factor 6 (ARF6). Doesn't show GAP activity for RAB35. The chain is Arf-GAP with coiled-coil, ANK repeat and PH domain-containing protein 2 (ACAP2) from Oryctolagus cuniculus (Rabbit).